Reading from the N-terminus, the 559-residue chain is Laccase-7 (559 aa).

Positions 1–28 are cleaved as a signal peptide; that stretch reads MVIPWCSSMMRLLWFLFALLLARSVADA. Asn32, Asn47, and Asn82 each carry an N-linked (GlcNAc...) asparagine glycan. Plastocyanin-like domains follow at residues 36–152 and 163–316; these read TVES…PRNG and EVPI…YNTT. 2 residues coordinate Cu cation: His86 and His88. Residues Asn112 and Asn120 are each glycosylated (N-linked (GlcNAc...) asparagine). The Cu cation site is built by His131 and His133. 8 N-linked (GlcNAc...) asparagine glycosylation sites follow: Asn151, Asn210, Asn220, Asn257, Asn278, Asn314, Asn363, and Asn443. A Plastocyanin-like 3 domain is found at 396 to 543; it reads FRLPSQMSLL…GMVFAVDNGT (148 aa). Cu cation is bound by residues His461, His464, and His466. N-linked (GlcNAc...) asparagine glycosylation occurs at Asn484. Positions 522, 523, 524, and 528 each coordinate Cu cation. Asn541 is a glycosylation site (N-linked (GlcNAc...) asparagine).

Belongs to the multicopper oxidase family. Requires Cu cation as cofactor.

It is found in the secreted. Its subcellular location is the extracellular space. The protein localises to the apoplast. It catalyses the reaction 4 hydroquinone + O2 = 4 benzosemiquinone + 2 H2O. Its function is as follows. Lignin degradation and detoxification of lignin-derived products. The polypeptide is Laccase-7 (LAC7) (Oryza sativa subsp. japonica (Rice)).